Reading from the N-terminus, the 106-residue chain is Small ribosomal subunit protein uS10 (106 aa).

Belongs to the universal ribosomal protein uS10 family. In terms of assembly, part of the 30S ribosomal subunit.

Its function is as follows. Involved in the binding of tRNA to the ribosomes. The chain is Small ribosomal subunit protein uS10 from Wolbachia sp. subsp. Drosophila simulans (strain wRi).